A 78-amino-acid chain; its full sequence is MNPMIEFCVSNLAHGSQEARAILEKDPNLDVLEYGCLSYCGTCMESLFALVNGEVVMGETPAELVENIYTFIEENPMF.

Belongs to the UPF0349 family.

The protein is UPF0349 protein YuzB (yuzB) of Bacillus subtilis (strain 168).